A 314-amino-acid polypeptide reads, in one-letter code: MLRIYAPASSANISVGFDTLGVAVSPIDGSLLGDVVQIEEIEQGFELESAGYFVRKLPKEPQKNIVYQAYVLFSERLKLRNLKIKPLRLTLEKNMPIGSGLGSSACSIVAALVALNQFYQQPFSKMELLEMMGELEGRISGSIHYDNVAPCYLGGVQLMVQSLGNICQQLPFFDNWYWVLAYPGIEVSTAEARAILPKSYTRQDVISHGRHLGSFVHACHTRQEALAAYMMRDVIAEPYREALLPNFAEVKQAVKDLGVLASGISGSGPTMFAIAPDLAIATKSATYLENNYLQNNEGFVHICKVDNVGARALV.

96-106 provides a ligand contact to ATP; sequence PIGSGLGSSAC.

The protein belongs to the GHMP kinase family. Homoserine kinase subfamily.

It is found in the cytoplasm. The enzyme catalyses L-homoserine + ATP = O-phospho-L-homoserine + ADP + H(+). It participates in amino-acid biosynthesis; L-threonine biosynthesis; L-threonine from L-aspartate: step 4/5. Functionally, catalyzes the ATP-dependent phosphorylation of L-homoserine to L-homoserine phosphate. The polypeptide is Homoserine kinase (Histophilus somni (strain 129Pt) (Haemophilus somnus)).